A 388-amino-acid chain; its full sequence is Phosphopentomutase (388 aa).

Mn(2+)-binding residues include Asp11, Asp283, His288, Asp324, His325, and His336.

The protein belongs to the phosphopentomutase family. It depends on Mn(2+) as a cofactor.

The protein localises to the cytoplasm. The enzyme catalyses 2-deoxy-alpha-D-ribose 1-phosphate = 2-deoxy-D-ribose 5-phosphate. It carries out the reaction alpha-D-ribose 1-phosphate = D-ribose 5-phosphate. Its pathway is carbohydrate degradation; 2-deoxy-D-ribose 1-phosphate degradation; D-glyceraldehyde 3-phosphate and acetaldehyde from 2-deoxy-alpha-D-ribose 1-phosphate: step 1/2. Its function is as follows. Isomerase that catalyzes the conversion of deoxy-ribose 1-phosphate (dRib-1-P) and ribose 1-phosphate (Rib-1-P) to deoxy-ribose 5-phosphate (dRib-5-P) and ribose 5-phosphate (Rib-5-P), respectively. The polypeptide is Phosphopentomutase (Anaeromyxobacter sp. (strain K)).